Reading from the N-terminus, the 460-residue chain is Probable lipase C14C8.15 (460 aa).

At 1–16 (MTLNGNIMKYCLEKGE) the chain is on the cytoplasmic side. The helical; Signal-anchor for type II membrane protein transmembrane segment at 17-37 (ILISFLLIALESMFRICTVIL) threads the bilayer. Over 38 to 460 (PSPLRNWFYE…LVDGVMNHTI (423 aa)) the chain is Lumenal. The active-site Nucleophile is the Ser-214. N-linked (GlcNAc...) asparagine glycosylation occurs at Asn-308. Catalysis depends on charge relay system residues Asp-382 and His-408. N-linked (GlcNAc...) asparagine glycosylation is present at Asn-457.

The protein belongs to the AB hydrolase superfamily. Lipase family.

The protein resides in the golgi apparatus. It is found in the membrane. Its function is as follows. Probable lipase. In Schizosaccharomyces pombe (strain 972 / ATCC 24843) (Fission yeast), this protein is Probable lipase C14C8.15.